The primary structure comprises 241 residues: 2-C-methyl-D-erythritol 4-phosphate cytidylyltransferase (241 aa).

The protein belongs to the IspD/TarI cytidylyltransferase family. IspD subfamily.

The enzyme catalyses 2-C-methyl-D-erythritol 4-phosphate + CTP + H(+) = 4-CDP-2-C-methyl-D-erythritol + diphosphate. Its pathway is isoprenoid biosynthesis; isopentenyl diphosphate biosynthesis via DXP pathway; isopentenyl diphosphate from 1-deoxy-D-xylulose 5-phosphate: step 2/6. In terms of biological role, catalyzes the formation of 4-diphosphocytidyl-2-C-methyl-D-erythritol from CTP and 2-C-methyl-D-erythritol 4-phosphate (MEP). This chain is 2-C-methyl-D-erythritol 4-phosphate cytidylyltransferase, found in Hahella chejuensis (strain KCTC 2396).